The sequence spans 166 residues: uncharacterized protein (166 aa).

This is an uncharacterized protein from Schizosaccharomyces pombe (strain 972 / ATCC 24843) (Fission yeast).